The sequence spans 431 residues: Signal recognition particle 54 kDa protein (431 aa).

GTP-binding positions include 105–112 (GVEGSGKT), 185–189 (DTAGR), and 243–246 (TKMD).

The protein belongs to the GTP-binding SRP family. SRP54 subfamily. As to quaternary structure, part of the signal recognition particle protein translocation system, which is composed of SRP and FtsY. Archaeal SRP consists of a 7S RNA molecule of 300 nucleotides and two protein subunits: SRP54 and SRP19.

The protein resides in the cytoplasm. It carries out the reaction GTP + H2O = GDP + phosphate + H(+). Involved in targeting and insertion of nascent membrane proteins into the cytoplasmic membrane. Binds to the hydrophobic signal sequence of the ribosome-nascent chain (RNC) as it emerges from the ribosomes. The SRP-RNC complex is then targeted to the cytoplasmic membrane where it interacts with the SRP receptor FtsY. In Pyrobaculum calidifontis (strain DSM 21063 / JCM 11548 / VA1), this protein is Signal recognition particle 54 kDa protein.